The primary structure comprises 443 residues: Serine/threonine-protein kinase SSN3 (443 aa).

The segment at 1 to 24 (MERKRGREMNPPSADPPSATPVAR) is disordered. The region spanning 54 to 384 (YKIVGFISSG…AEKALEHRYF (331 aa)) is the Protein kinase domain. Residues 60–68 (ISSGTYGRV) and Lys84 contribute to the ATP site. Asp185 (proton acceptor) is an active-site residue. The segment at 405-443 (RRVSQEDNDIRTSSLPGTKRSGLPDDSLMGRPAKRLKEG) is disordered.

This sequence belongs to the protein kinase superfamily. CMGC Ser/Thr protein kinase family. CDC2/CDKX subfamily. As to quaternary structure, component of the srb8-11 complex, a regulatory module of the Mediator complex. The cofactor is Mg(2+).

The protein localises to the nucleus. It catalyses the reaction L-seryl-[protein] + ATP = O-phospho-L-seryl-[protein] + ADP + H(+). The enzyme catalyses L-threonyl-[protein] + ATP = O-phospho-L-threonyl-[protein] + ADP + H(+). It carries out the reaction [DNA-directed RNA polymerase] + ATP = phospho-[DNA-directed RNA polymerase] + ADP + H(+). Its function is as follows. Component of the srb8-11 complex. The srb8-11 complex is a regulatory module of the Mediator complex which is itself dependent transcription. The srb8-11 complex may be involved in the transcriptional repression of a subset of genes regulated by Mediator. It may inhibit the association of the Mediator complex with RNA polymerase II to form the holoenzyme complex. The srb8-11 complex phosphorylates the C-terminal domain (CTD) of the largest subunit of RNA polymerase II. The protein is Serine/threonine-protein kinase SSN3 (SSN3) of Phaeosphaeria nodorum (strain SN15 / ATCC MYA-4574 / FGSC 10173) (Glume blotch fungus).